The chain runs to 120 residues: Cytochrome c-550 (120 aa).

Residues 5 to 25 (PLIPFLLIAVLGIGLTFFLSV) traverse the membrane as a helical segment. The Periplasmic segment spans residues 26–120 (KGLDDSREIA…DMAEWVSKIK (95 aa)). Residues C60, C63, H64, and M99 each coordinate heme c.

In terms of processing, binds 1 heme c group covalently per subunit.

It is found in the cell membrane. In terms of biological role, not essential for growth on minimal or rich media. The sequence is that of Cytochrome c-550 (cccA) from Bacillus subtilis (strain 168).